Reading from the N-terminus, the 496-residue chain is MSAKFEISFSKSAKLTGGLAILLKTTDADSAAGAETVDPAGVIAKAARIARFSAKSMSALDIVAPEGASVERIVVIGLGKAADLTAHDWLKAGGTAAARIKNTDKTAVFIDVPGRETSARAAADFALGMLLRTYSFDTYKTKKNDDEEKAGKSVKVTIVTTDPAGAKKAFSDSEAIAGGVNLARDLVNEPPNVLGPVEFAAKAKELEKLGIEVEILTEKEMRRFGMGALLGVAQGSVRPPRLAVMQWKGGKAKDRPVAFIGKGVVFDTGGISIKPAAGMEDMKGDMGGAAAVTGLMHVLASRKAAVNAVGIIGLVENMPDGNAQRPGDIVTSMSGQTIEVINTDAEGRLVLCDALWYCNDRFKPQFMINLATLTGAIVVALGNVHAGLFSNDDQLSAQLTEAGLSTNEKLWRMPLGKDYDKLIDSKFADMKNTGGRQAGSITAAHFIKRFVQDTPWAHLDIAGTAMGSPQDEINQSWGSGFGVRLLDELVRAHYES.

Residues Lys-262 and Asp-267 each contribute to the Mn(2+) site. The active site involves Lys-274. 3 residues coordinate Mn(2+): Asp-285, Asp-344, and Glu-346. Arg-348 is a catalytic residue.

The protein belongs to the peptidase M17 family. Mn(2+) serves as cofactor.

The protein localises to the cytoplasm. It catalyses the reaction Release of an N-terminal amino acid, Xaa-|-Yaa-, in which Xaa is preferably Leu, but may be other amino acids including Pro although not Arg or Lys, and Yaa may be Pro. Amino acid amides and methyl esters are also readily hydrolyzed, but rates on arylamides are exceedingly low.. The catalysed reaction is Release of an N-terminal amino acid, preferentially leucine, but not glutamic or aspartic acids.. In terms of biological role, presumably involved in the processing and regular turnover of intracellular proteins. Catalyzes the removal of unsubstituted N-terminal amino acids from various peptides. This is Probable cytosol aminopeptidase from Rhizobium leguminosarum bv. trifolii (strain WSM2304).